The chain runs to 842 residues: Non-motile and phage-resistance protein (842 aa).

3 consecutive transmembrane segments (helical) span residues Val29–Val50, Gly283–Ile303, and Val343–Gly363. In terms of domain architecture, PAS spans Ser318–Gly389. Residues Asn607–His830 enclose the Histidine kinase domain. Position 610 is a phosphohistidine; by autocatalysis (His610).

The protein localises to the cell membrane. The enzyme catalyses ATP + protein L-histidine = ADP + protein N-phospho-L-histidine.. In terms of biological role, member of the two-component regulatory system involved in the regulation of polar organelle development. PleC functions as a membrane-associated protein kinase that transfers phosphate to the response regulator PleD, leading to its activation. This chain is Non-motile and phage-resistance protein (pleC), found in Caulobacter vibrioides (strain ATCC 19089 / CIP 103742 / CB 15) (Caulobacter crescentus).